The chain runs to 262 residues: Carboxy-S-adenosyl-L-methionine synthase (262 aa).

S-adenosyl-L-methionine-binding positions include tyrosine 50, 84–86, 137–138, asparagine 152, and arginine 219; these read GCS and DI.

The protein belongs to the class I-like SAM-binding methyltransferase superfamily. Cx-SAM synthase family. In terms of assembly, homodimer.

The enzyme catalyses prephenate + S-adenosyl-L-methionine = carboxy-S-adenosyl-L-methionine + 3-phenylpyruvate + H2O. In terms of biological role, catalyzes the conversion of S-adenosyl-L-methionine (SAM) to carboxy-S-adenosyl-L-methionine (Cx-SAM). The polypeptide is Carboxy-S-adenosyl-L-methionine synthase (Psychrobacter arcticus (strain DSM 17307 / VKM B-2377 / 273-4)).